A 302-amino-acid polypeptide reads, in one-letter code: MALNFWKSSHCQQWIFDKTEIWKQRAEDMKIYNEEEYNRLNIFWANFITAVATEGAHSQANVGCKLRQQVIATAIIYFKRFYLRQSFRDMCPFLVASTALFLACKVEEHTTLSVSSFLKNTAIVLPKRWGVTFETTSTKNGVVYDSEFILVEILDCCLVVHHASRPMFELLEDLKQFTQQSTIANQPIKDLEAIEAQCQKVANDSLRCDVSLIFPPHVIGLSSIMVAMELMGRGEELEAWLVEVDTDFEKVTDCVEQIYKMYTLWKSFDEKEEVKKLMAKLPKPNQQPPPQQQHQHQQGYHL.

Residues 46–152 (NFITAVATEG…VYDSEFILVE (107 aa)) enclose the Cyclin N-terminal domain. Residues 281–302 (LPKPNQQPPPQQQHQHQQGYHL) are disordered. The segment covering 292 to 302 (QQHQHQQGYHL) has biased composition (low complexity).

This sequence belongs to the cyclin family. Cyclin C subfamily. In terms of assembly, component of the Mediator complex.

The protein resides in the nucleus. Functionally, component of the Mediator complex, a coactivator involved in regulated gene transcription of nearly all RNA polymerase II-dependent genes. Mediator functions as a bridge to convey information from gene-specific regulatory proteins to the basal RNA polymerase II transcription machinery. Mediator is recruited to promoters by direct interactions with regulatory proteins and serves as a scaffold for the assembly of a functional preinitiation complex with RNA polymerase II and the general transcription factors. Binds to and activates cyclin-dependent kinase cdk-8 that phosphorylates the CTD (C-terminal domain) of the large subunit of RNA polymerase II (RNAp II), which may inhibit the formation of a transcription initiation complex. The chain is Cyclin-C (cic-1) from Caenorhabditis elegans.